The sequence spans 167 residues: Biotin carboxyl carrier protein of acetyl-CoA carboxylase (167 aa).

The tract at residues 53–91 is disordered; the sequence is SGFSQERPIPTDPKKDTIKETTTENSETSTTTSSGDFIS. Positions 64–74 are enriched in basic and acidic residues; the sequence is DPKKDTIKETT. The segment covering 75–86 has biased composition (low complexity); the sequence is TENSETSTTTSS. Residues 87–163 form the Biotinyl-binding domain; sequence GDFISSPLVG…QFGSKLFRIA (77 aa). N6-biotinyllysine is present on Lys-129.

Homodimer.

It functions in the pathway lipid metabolism; fatty acid biosynthesis. Functionally, this protein is a component of the acetyl coenzyme A carboxylase complex; first, biotin carboxylase catalyzes the carboxylation of the carrier protein and then the transcarboxylase transfers the carboxyl group to form malonyl-CoA. This chain is Biotin carboxyl carrier protein of acetyl-CoA carboxylase (accB), found in Chlamydia pneumoniae (Chlamydophila pneumoniae).